An 892-amino-acid polypeptide reads, in one-letter code: DNA mismatch repair protein MutS (892 aa).

Gly-607–Ser-614 is a binding site for ATP. The tract at residues Glu-833 to Asp-855 is disordered. Positions Ser-845–Asp-855 are enriched in basic and acidic residues.

This sequence belongs to the DNA mismatch repair MutS family.

This protein is involved in the repair of mismatches in DNA. It is possible that it carries out the mismatch recognition step. This protein has a weak ATPase activity. The protein is DNA mismatch repair protein MutS of Bacillus anthracis (strain A0248).